The primary structure comprises 435 residues: Methylenetetrahydrofolate--tRNA-(uracil-5-)-methyltransferase TrmFO (435 aa).

9 to 14 (GGGLAG) contacts FAD.

This sequence belongs to the MnmG family. TrmFO subfamily. Requires FAD as cofactor.

It localises to the cytoplasm. It carries out the reaction uridine(54) in tRNA + (6R)-5,10-methylene-5,6,7,8-tetrahydrofolate + NADH + H(+) = 5-methyluridine(54) in tRNA + (6S)-5,6,7,8-tetrahydrofolate + NAD(+). It catalyses the reaction uridine(54) in tRNA + (6R)-5,10-methylene-5,6,7,8-tetrahydrofolate + NADPH + H(+) = 5-methyluridine(54) in tRNA + (6S)-5,6,7,8-tetrahydrofolate + NADP(+). Functionally, catalyzes the folate-dependent formation of 5-methyl-uridine at position 54 (M-5-U54) in all tRNAs. In Geobacter sp. (strain M21), this protein is Methylenetetrahydrofolate--tRNA-(uracil-5-)-methyltransferase TrmFO.